A 406-amino-acid polypeptide reads, in one-letter code: 5-cytosine rRNA methyltransferase NSUN4 (406 aa).

Residues Gly207, Gly208, Lys209, Asp226, Arg231, Asp259, Gly260, and Asp277 each coordinate S-adenosyl-L-methionine. The active-site Nucleophile is Cys332.

It belongs to the class I-like SAM-binding methyltransferase superfamily. RsmB/NOP family.

The protein localises to the mitochondrion. It catalyses the reaction a cytidine in rRNA + S-adenosyl-L-methionine = a 5-methylcytidine in rRNA + S-adenosyl-L-homocysteine + H(+). It carries out the reaction a cytidine in mRNA + S-adenosyl-L-methionine = a 5-methylcytidine in mRNA + S-adenosyl-L-homocysteine + H(+). Its function is as follows. Mitochondrial RNA cytosine C(5)-methyltransferase that methylates cytosine to 5-methylcytosine (m5C) in various RNAs, such as rRNAs, mRNAs and some long non-coding RNAs (lncRNAs). Involved in mitochondrial ribosome small subunit (SSU) maturation by catalyzing methylation of mitochondrial 12S rRNA. The chain is 5-cytosine rRNA methyltransferase NSUN4 (nsun4) from Xenopus laevis (African clawed frog).